The following is a 594-amino-acid chain: UvrABC system protein C (594 aa).

The GIY-YIG domain maps to 15–92 (DKPGCYQMKN…IQKFQPYYNI (78 aa)). The UVR domain maps to 197-232 (AKIKQSLQTKMQKASEAMEFERAADIRDQIHYIEVT).

Belongs to the UvrC family. In terms of assembly, interacts with UvrB in an incision complex.

It is found in the cytoplasm. Its function is as follows. The UvrABC repair system catalyzes the recognition and processing of DNA lesions. UvrC both incises the 5' and 3' sides of the lesion. The N-terminal half is responsible for the 3' incision and the C-terminal half is responsible for the 5' incision. This Pediococcus pentosaceus (strain ATCC 25745 / CCUG 21536 / LMG 10740 / 183-1w) protein is UvrABC system protein C.